We begin with the raw amino-acid sequence, 144 residues long: Mating factor alpha (144 aa).

The segment at residues M1 to A19 is a signal peptide (or 20).

In terms of biological role, the active factor is excreted into the culture medium by haploid cells of the alpha mating type and acts on cells of the opposite mating type (type A). It mediates the conjugation process between the two types by inhibiting the initiation of DNA synthesis in type a cells and synchronizing them with type alpha. The polypeptide is Mating factor alpha (Saccharomyces uvarum (Yeast)).